The following is a 260-amino-acid chain: UPF0246 protein Bmul_1054/BMULJ_02209 (260 aa).

This sequence belongs to the UPF0246 family.

This Burkholderia multivorans (strain ATCC 17616 / 249) protein is UPF0246 protein Bmul_1054/BMULJ_02209.